We begin with the raw amino-acid sequence, 154 residues long: Myoglobin (154 aa).

Positions 2–148 (GLSDGEWQLV…FRNDMAAQYK (147 aa)) constitute a Globin domain. Ser4 carries the phosphoserine modification. His65 serves as a coordination point for nitrite. His65 lines the O2 pocket. Position 68 is a phosphothreonine (Thr68). His94 lines the heme b pocket.

It belongs to the globin family. Monomeric.

It localises to the cytoplasm. The protein localises to the sarcoplasm. It catalyses the reaction Fe(III)-heme b-[protein] + nitric oxide + H2O = Fe(II)-heme b-[protein] + nitrite + 2 H(+). The catalysed reaction is H2O2 + AH2 = A + 2 H2O. Its function is as follows. Monomeric heme protein which primary function is to store oxygen and facilitate its diffusion within muscle tissues. Reversibly binds oxygen through a pentacoordinated heme iron and enables its timely and efficient release as needed during periods of heightened demand. Depending on the oxidative conditions of tissues and cells, and in addition to its ability to bind oxygen, it also has a nitrite reductase activity whereby it regulates the production of bioactive nitric oxide. Under stress conditions, like hypoxia and anoxia, it also protects cells against reactive oxygen species thanks to its pseudoperoxidase activity. The sequence is that of Myoglobin (MB) from Bos mutus grunniens (Wild yak).